Consider the following 1382-residue polypeptide: Hepatocyte growth factor receptor (1382 aa).

Residues Met1 to Gly24 form the signal peptide. Over Glu25–Leu935 the chain is Extracellular. Residues Glu27 to Leu516 form the Sema domain. Residue Asn45 is glycosylated (N-linked (GlcNAc...) asparagine). 4 disulfide bridges follow: Cys95-Cys101, Cys98-Cys160, Cys133-Cys141, and Cys173-Cys176. Asn106 carries an N-linked (GlcNAc...) asparagine glycan. 2 N-linked (GlcNAc...) asparagine glycosylation sites follow: Asn203 and Asn359. 2 disulfides stabilise this stretch: Cys299–Cys364 and Cys386–Cys398. N-linked (GlcNAc...) asparagine glycans are attached at residues Asn400, Asn406, and Asn450. Disulfide bonds link Cys521/Cys539, Cys527/Cys562, Cys530/Cys546, and Cys542/Cys552. IPT/TIG domains lie at Pro564 to Val656, Pro658 to Gln740, and Pro743 to Val837. A glycan (O-linked (Man) threonine) is linked at Thr583. N-linked (GlcNAc...) asparagine glycosylation is found at Asn608 and Asn636. The O-linked (Man) threonine glycan is linked to Thr677. Asn751 carries N-linked (GlcNAc...) asparagine glycosylation. Thr762 carries an O-linked (Man) threonine glycan. N-linked (GlcNAc...) asparagine glycosylation is found at Asn786, Asn880, and Asn931. Residues Ile936–Leu956 form a helical membrane-spanning segment. The Cytoplasmic segment spans residues Lys957–Thr1382. Ser967 is subject to Phosphoserine. Thr978 carries the post-translational modification Phosphothreonine. 3 positions are modified to phosphoserine: Ser991, Ser998, and Ser1001. Phosphotyrosine is present on Tyr1004. The Protein kinase domain occupies Val1079 to Ile1346. Residues Ile1085–Val1093 and Lys1111 contribute to the ATP site. Asp1205 serves as the catalytic Proton acceptor. The segment at Leu1213–Thr1382 is interaction with RANBP9. Tyr1231 bears the Phosphotyrosine mark. Residues Tyr1235 and Tyr1236 each carry the phosphotyrosine; by autocatalysis modification. Position 1290 is a phosphothreonine (Thr1290). The interaction with MUC20 stretch occupies residues Trp1321–Val1360. Residues Tyr1350 and Tyr1357 each carry the phosphotyrosine; by autocatalysis modification. Position 1366 is a phosphotyrosine (Tyr1366).

The protein belongs to the protein kinase superfamily. Tyr protein kinase family. Heterodimer made of an alpha chain (50 kDa) and a beta chain (145 kDa) which are disulfide linked. Binds PLXNB1. Interacts when phosphorylated with downstream effectors including STAT3, PIK3R1, SRC, PCLG1, GRB2 and GAB1. Interacts with SPSB1, SPSB2 and SPSB4. Interacts with INPP5D/SHIP1. When phosphorylated at Tyr-1357, interacts with INPPL1/SHIP2. Interacts with RANBP9 and RANBP10, as well as SPSB1, SPSB2, SPSB3 and SPSB4. SPSB1 binding occurs in the presence and in the absence of HGF, however HGF treatment has a positive effect on this interaction. Interacts with MUC20; prevents interaction with GRB2 and suppresses hepatocyte growth factor-induced cell proliferation. Interacts with GRB10. Interacts with PTPN1 and PTPN2. Interacts with HSP90AA1 and HSP90AB1; the interaction suppresses MET kinase activity. Interacts with tensin TNS3. Interacts (when phosphorylated) with tensin TNS4 (via SH2 domain); the interaction increases MET protein stability by inhibiting MET endocytosis and subsequent lysosomal degradation. Autophosphorylated in response to ligand binding on Tyr-1235 and Tyr-1236 in the kinase domain leading to further phosphorylation of Tyr-1350 and Tyr-1357 in the C-terminal multifunctional docking site. Dephosphorylated by PTPRJ at Tyr-1350 and Tyr-1366. Dephosphorylated by PTPN1 and PTPN2. In terms of processing, ubiquitinated. Ubiquitination by CBL regulates the receptor stability and activity through proteasomal degradation. Post-translationally, O-mannosylation of IPT/TIG domains by TMEM260 is required for protein maturation. O-mannosylated residues are composed of single mannose glycans that are not elongated or modified.

It is found in the membrane. It catalyses the reaction L-tyrosyl-[protein] + ATP = O-phospho-L-tyrosyl-[protein] + ADP + H(+). With respect to regulation, in its inactive state, the C-terminal tail interacts with the catalytic domain and inhibits the kinase activity. Upon ligand binding, the C-terminal tail is displaced and becomes phosphorylated, thus increasing the kinase activity. Receptor tyrosine kinase that transduces signals from the extracellular matrix into the cytoplasm by binding to hepatocyte growth factor/HGF ligand. Regulates many physiological processes including proliferation, scattering, morphogenesis and survival. Ligand binding at the cell surface induces autophosphorylation of MET on its intracellular domain that provides docking sites for downstream signaling molecules. Following activation by ligand, interacts with the PI3-kinase subunit PIK3R1, PLCG1, SRC, GRB2, STAT3 or the adapter GAB1. Recruitment of these downstream effectors by MET leads to the activation of several signaling cascades including the RAS-ERK, PI3 kinase-AKT, or PLCgamma-PKC. The RAS-ERK activation is associated with the morphogenetic effects while PI3K/AKT coordinates prosurvival effects. During embryonic development, MET signaling plays a role in gastrulation, development and migration of muscles and neuronal precursors, angiogenesis and kidney formation. In adults, participates in wound healing as well as organ regeneration and tissue remodeling. Also promotes differentiation and proliferation of hematopoietic cells. The sequence is that of Hepatocyte growth factor receptor (MET) from Loxodonta africana (African elephant).